A 294-amino-acid polypeptide reads, in one-letter code: tRNA pseudouridine synthase B (294 aa).

Catalysis depends on Asp-38, which acts as the Nucleophile.

It belongs to the pseudouridine synthase TruB family. Type 1 subfamily.

It catalyses the reaction uridine(55) in tRNA = pseudouridine(55) in tRNA. Functionally, responsible for synthesis of pseudouridine from uracil-55 in the psi GC loop of transfer RNAs. The sequence is that of tRNA pseudouridine synthase B from Clostridium perfringens (strain SM101 / Type A).